A 199-amino-acid polypeptide reads, in one-letter code: Putative acetyltransferase SACOL2570 (199 aa).

The protein belongs to the transferase hexapeptide repeat family.

The chain is Putative acetyltransferase SACOL2570 from Staphylococcus aureus (strain COL).